The chain runs to 192 residues: Thymidylate kinase (192 aa).

ATP is bound at residue G7 to S14.

The protein belongs to the thymidylate kinase family.

The catalysed reaction is dTMP + ATP = dTDP + ADP. Its function is as follows. Phosphorylation of dTMP to form dTDP in both de novo and salvage pathways of dTTP synthesis. The chain is Thymidylate kinase from Campylobacter fetus subsp. fetus (strain 82-40).